Here is a 557-residue protein sequence, read N- to C-terminus: Dihydroxy-acid dehydratase (557 aa).

Residue Asp78 coordinates Mg(2+). Cys119 is a [2Fe-2S] cluster binding site. The Mg(2+) site is built by Asp120 and Lys121. Lys121 bears the N6-carboxylysine mark. A [2Fe-2S] cluster-binding site is contributed by Cys191. Glu442 is a binding site for Mg(2+). Ser468 (proton acceptor) is an active-site residue.

Belongs to the IlvD/Edd family. In terms of assembly, homodimer. The cofactor is [2Fe-2S] cluster. It depends on Mg(2+) as a cofactor.

It catalyses the reaction (2R)-2,3-dihydroxy-3-methylbutanoate = 3-methyl-2-oxobutanoate + H2O. It carries out the reaction (2R,3R)-2,3-dihydroxy-3-methylpentanoate = (S)-3-methyl-2-oxopentanoate + H2O. It participates in amino-acid biosynthesis; L-isoleucine biosynthesis; L-isoleucine from 2-oxobutanoate: step 3/4. It functions in the pathway amino-acid biosynthesis; L-valine biosynthesis; L-valine from pyruvate: step 3/4. Functions in the biosynthesis of branched-chain amino acids. Catalyzes the dehydration of (2R,3R)-2,3-dihydroxy-3-methylpentanoate (2,3-dihydroxy-3-methylvalerate) into 2-oxo-3-methylpentanoate (2-oxo-3-methylvalerate) and of (2R)-2,3-dihydroxy-3-methylbutanoate (2,3-dihydroxyisovalerate) into 2-oxo-3-methylbutanoate (2-oxoisovalerate), the penultimate precursor to L-isoleucine and L-valine, respectively. The polypeptide is Dihydroxy-acid dehydratase (Syntrophobacter fumaroxidans (strain DSM 10017 / MPOB)).